Reading from the N-terminus, the 665-residue chain is DNA ligase (665 aa).

NAD(+) contacts are provided by residues 31–35, 80–81, and glutamate 111; these read DEEFD and SL. The active-site N6-AMP-lysine intermediate is lysine 113. Residues arginine 134, glutamate 171, lysine 287, and lysine 311 each contribute to the NAD(+) site. Residues cysteine 405, cysteine 408, cysteine 423, and cysteine 429 each contribute to the Zn(2+) site. One can recognise a BRCT domain in the interval 588 to 665; that stretch reads FTNHAFQGKI…NEKEFISLCH (78 aa).

The protein belongs to the NAD-dependent DNA ligase family. LigA subfamily. The cofactor is Mg(2+). Mn(2+) is required as a cofactor.

The catalysed reaction is NAD(+) + (deoxyribonucleotide)n-3'-hydroxyl + 5'-phospho-(deoxyribonucleotide)m = (deoxyribonucleotide)n+m + AMP + beta-nicotinamide D-nucleotide.. In terms of biological role, DNA ligase that catalyzes the formation of phosphodiester linkages between 5'-phosphoryl and 3'-hydroxyl groups in double-stranded DNA using NAD as a coenzyme and as the energy source for the reaction. It is essential for DNA replication and repair of damaged DNA. This is DNA ligase from Protochlamydia amoebophila (strain UWE25).